Reading from the N-terminus, the 415-residue chain is 3-isopropylmalate dehydratase large subunit (415 aa).

[4Fe-4S] cluster-binding residues include C297, C355, and C358.

The protein belongs to the aconitase/IPM isomerase family. LeuC type 2 subfamily. As to quaternary structure, heterodimer of LeuC and LeuD. Requires [4Fe-4S] cluster as cofactor.

The catalysed reaction is (2R,3S)-3-isopropylmalate = (2S)-2-isopropylmalate. The protein operates within amino-acid biosynthesis; L-leucine biosynthesis; L-leucine from 3-methyl-2-oxobutanoate: step 2/4. In terms of biological role, catalyzes the isomerization between 2-isopropylmalate and 3-isopropylmalate, via the formation of 2-isopropylmaleate. The protein is 3-isopropylmalate dehydratase large subunit of Caldivirga maquilingensis (strain ATCC 700844 / DSM 13496 / JCM 10307 / IC-167).